A 378-amino-acid chain; its full sequence is Enoyl-[acyl-carrier-protein] reductase 1, mitochondrial (378 aa).

Tyr59 acts as the Proton donor in catalysis. Residues Asn151, 180–183 (NSQV), 203–206 (RDGK), 284–287 (YGGM), 309–311 (YWL), and Lys372 contribute to the NADP(+) site.

This sequence belongs to the zinc-containing alcohol dehydrogenase family. Quinone oxidoreductase subfamily. As to quaternary structure, homodimer.

It localises to the mitochondrion matrix. The catalysed reaction is a 2,3-saturated acyl-[ACP] + NADP(+) = a (2E)-enoyl-[ACP] + NADPH + H(+). Catalyzes the NADPH-dependent reduction of trans-2-enoyl thioesters in mitochondrial fatty acid synthesis (fatty acid synthesis type II). Fatty acid chain elongation in mitochondria uses acyl carrier protein (ACP) as an acyl group carrier, but the enzyme accepts both ACP and CoA thioesters as substrates in vitro. Required for respiration and the maintenance of the mitochondrial compartment. The chain is Enoyl-[acyl-carrier-protein] reductase 1, mitochondrial (ETR1) from Debaryomyces hansenii (strain ATCC 36239 / CBS 767 / BCRC 21394 / JCM 1990 / NBRC 0083 / IGC 2968) (Yeast).